Here is a 485-residue protein sequence, read N- to C-terminus: Membrane-bound lytic murein transglycosylase F (485 aa).

Positions 1–29 (MFAHTALRQRCAKWLLATGLFLLLGACVE) are cleaved as a signal peptide. Residues 30 to 267 (KPSTLERVKE…RLKDRYYGHV (238 aa)) form a non-LT domain region. The LT domain stretch occupies residues 268-485 (DVLGYVGAYT…DKPADKSSPM (218 aa)). Glu-314 is a catalytic residue. Positions 465 to 485 (EGNLHVPGVNKDKPADKSSPM) are disordered. Residues 474–485 (NKDKPADKSSPM) show a composition bias toward basic and acidic residues.

The protein in the N-terminal section; belongs to the bacterial solute-binding protein 3 family. It in the C-terminal section; belongs to the transglycosylase Slt family.

It localises to the cell outer membrane. It catalyses the reaction Exolytic cleavage of the (1-&gt;4)-beta-glycosidic linkage between N-acetylmuramic acid (MurNAc) and N-acetylglucosamine (GlcNAc) residues in peptidoglycan, from either the reducing or the non-reducing ends of the peptidoglycan chains, with concomitant formation of a 1,6-anhydrobond in the MurNAc residue.. Its function is as follows. Murein-degrading enzyme that degrades murein glycan strands and insoluble, high-molecular weight murein sacculi, with the concomitant formation of a 1,6-anhydromuramoyl product. Lytic transglycosylases (LTs) play an integral role in the metabolism of the peptidoglycan (PG) sacculus. Their lytic action creates space within the PG sacculus to allow for its expansion as well as for the insertion of various structures such as secretion systems and flagella. This Pseudomonas putida (strain ATCC 47054 / DSM 6125 / CFBP 8728 / NCIMB 11950 / KT2440) protein is Membrane-bound lytic murein transglycosylase F.